The chain runs to 104 residues: Large ribosomal subunit protein uL24 (104 aa).

This sequence belongs to the universal ribosomal protein uL24 family. In terms of assembly, part of the 50S ribosomal subunit.

One of two assembly initiator proteins, it binds directly to the 5'-end of the 23S rRNA, where it nucleates assembly of the 50S subunit. In terms of biological role, one of the proteins that surrounds the polypeptide exit tunnel on the outside of the subunit. The chain is Large ribosomal subunit protein uL24 from Chromobacterium violaceum (strain ATCC 12472 / DSM 30191 / JCM 1249 / CCUG 213 / NBRC 12614 / NCIMB 9131 / NCTC 9757 / MK).